Reading from the N-terminus, the 528-residue chain is Tubulin-specific chaperone E (528 aa).

The 45-residue stretch at 27 to 71 (GLVPPVAGLWLGVEWDNPERGKHDGSHEGTVYFKCRHPTAGSFIR) folds into the CAP-Gly domain. 7 LRR repeats span residues 152–176 (CPNIRSIDLSKNLLSSWEEVIDIAD), 178–206 (LKHLEVLNLSENKLTSPSSSPSPTGTFPT), 207–229 (LKVLVLNRTGVTWAEVLRCASGW), 231–253 (VLEKLYLESNNIIISERPTDVLQ), 254–274 (TVKLLDLSSNQLIDENQLFLI), 279–300 (RLEQLILSDIGISSIHFPDAGI), and 309–330 (SLQYLVLNDNQIAQWSFMNELD). An LRRCT domain is found at 343–385 (NPLTEGSKDAQTTRQFIIARIGQLRTLNKCAIEPEERRGAELD). At lysine 464 the chain carries N6-acetyllysine. Serine 496 is modified (phosphoserine).

The protein belongs to the TBCE family. In terms of assembly, supercomplex made of cofactors A to E. Cofactors A and D function by capturing and stabilizing tubulin in a quasi-native conformation. Cofactor E binds to the cofactor D-tubulin complex; interaction with cofactor C then causes the release of tubulin polypeptides that are committed to the native state. Cofactors B and E can form a heterodimer which binds to alpha-tubulin and enhances their ability to dissociate tubulin heterodimers. Interacts with TBCD.

Its subcellular location is the cytoplasm. The protein resides in the cytoskeleton. Functionally, tubulin-folding protein; involved in the second step of the tubulin folding pathway and in the regulation of tubulin heterodimer dissociation. Required for correct organization of microtubule cytoskeleton and mitotic splindle, and maintenance of the neuronal microtubule network. This Bos taurus (Bovine) protein is Tubulin-specific chaperone E (TBCE).